The following is a 241-amino-acid chain: Carboxy-S-adenosyl-L-methionine synthase (241 aa).

S-adenosyl-L-methionine-binding positions include Y38, 63-65 (GCS), 88-89 (DN), 116-117 (DI), N131, and R198.

This sequence belongs to the class I-like SAM-binding methyltransferase superfamily. Cx-SAM synthase family. In terms of assembly, homodimer.

It catalyses the reaction prephenate + S-adenosyl-L-methionine = carboxy-S-adenosyl-L-methionine + 3-phenylpyruvate + H2O. In terms of biological role, catalyzes the conversion of S-adenosyl-L-methionine (SAM) to carboxy-S-adenosyl-L-methionine (Cx-SAM). The chain is Carboxy-S-adenosyl-L-methionine synthase from Actinobacillus pleuropneumoniae serotype 7 (strain AP76).